The sequence spans 238 residues: Oxidoreductase dmxR7 (238 aa).

Belongs to the avfA family.

The protein operates within secondary metabolite biosynthesis. Oxidoreductase; part of the gene cluster that mediates the biosynthesis of the dimeric xanthones cryptosporioptides. The pathway begins with the synthesis of atrochrysone thioester by the polyketide synthase dmx-nrPKS. The atrochrysone carboxyl ACP thioesterase dmxR1 then breaks the thioester bond and releases the atrochrysone carboxylic acid from dmx-nrPKS. Atrochrysone carboxylic acid is decarboxylated by the decarboxylase dmxR15, and oxidized by the anthrone oxygenase dmxR16 to yield emodin. Emodin is then reduced to emodin hydroquinone by the oxidoreductase dmxR7. A-ring reduction by the short chain dehydrogenase dmxR18, dehydration by the scytalone dehydratase-like protein dmxR17 and probable spontaneous re-oxidation, results in overall deoxygenation to chrysophanol. Baeyer-Villiger oxidation by the Baeyer-Villiger monooxygenase (BVMO) dmxR6 then yields monodictylactone in equilibrium with monodictyphenone. In the case of the cryptosporioptides biosynthesis, monodictylactone is reduced at C-12 to an alcohol (by the short chain dehydrogenases dmxR12 or dmxR8) and hydroxylated at C-5 by dmxR9, yielding the electron-rich aromatic which could eliminate H(2)O to form the ortho-quinonemethide, followed by tautomerisation to paraquinone and complete the formal reduction to produce the 10-methylgroup. Conjugate addition of C-4a-OH to the resulting paraquinone by the monooxygenase dmxR10 then gives cyclohexadienone, which is then reduced at C-5 by the short chain dehydrogenase dmxR3 to give the dihydroxanthone. The 6,7-epoxide in the cryptosporioptides could be introduced by the cytochrome P450 monooxygenase dmxL3. The highly reducing PKS dmxL2 manufactures butyrate, which is further carboxylated by dmxL1 to form ethylmalonate. It is not yet clear whether the carboxylation occurs while the butyrate is attached to the ACP of dmxL2, but this unusual fungal metabolite could then be esterified to O-5 by the O-acetyltransferase dmxR13. Finally, dimerization performed by dmxR5 gives the observed dimers cryptosporioptides A, B and C as the final products of the pathway. The polypeptide is Oxidoreductase dmxR7 (Cryptosporiopsis sp. (strain 8999)).